The following is a 161-amino-acid chain: Nucleotide-binding protein Rfer_2692 (161 aa).

It belongs to the YajQ family.

Functionally, nucleotide-binding protein. This is Nucleotide-binding protein Rfer_2692 from Albidiferax ferrireducens (strain ATCC BAA-621 / DSM 15236 / T118) (Rhodoferax ferrireducens).